We begin with the raw amino-acid sequence, 212 residues long: Ion-translocating oxidoreductase complex subunit G (212 aa).

A helical transmembrane segment spans residues 9–29 (GLLLALFALLCTGLVAVVNQQ). Position 176 is an FMN phosphoryl threonine (threonine 176).

This sequence belongs to the RnfG family. The complex is composed of six subunits: RnfA, RnfB, RnfC, RnfD, RnfE and RnfG. Requires FMN as cofactor.

It localises to the cell inner membrane. Functionally, part of a membrane-bound complex that couples electron transfer with translocation of ions across the membrane. In Shewanella oneidensis (strain ATCC 700550 / JCM 31522 / CIP 106686 / LMG 19005 / NCIMB 14063 / MR-1), this protein is Ion-translocating oxidoreductase complex subunit G.